The primary structure comprises 282 residues: Transcription factor BC1 (282 aa).

The segment at 34–123 is disordered; that stretch reads TTAPAIPEDA…ATDSHSLAER (90 aa). Polar residues predominate over residues 45-55; it reads METSSVVLDTS. Basic and acidic residues predominate over residues 75-84; sequence HSKEAKENGR. The short motif at 109-116 is the Nuclear localization signal element; that stretch reads ARRGQATD. The segment at 113-126 is basic motif; degenerate; sequence QATDSHSLAERVRR. Positions 113–163 constitute a bHLH domain; sequence QATDSHSLAERVRRERISERMRMLQALVPGCDKVTGKALILDEIINYVQSL. The helix-loop-helix motif stretch occupies residues 127-163; the sequence is ERISERMRMLQALVPGCDKVTGKALILDEIINYVQSL. Residues 219–251 form a disordered region; it reads PAQSHAIMDTSNTSPTPYTLQVQGGSNNNSLSQ.

This sequence belongs to the bHLH protein family. In terms of assembly, homodimer. Component of a nuclear cell elongation controlling complex made of ILI5/BUL1, LO9-177 and BC1. Interacts with ILI5/BUL1 only in the presence of LO9-177. Interacts with IBH1. Binds to LO9-177 in the nucleus. Interacts with BCL1. As to expression, preferentially present in anthers and leaves lamina joints. Expressed in seedlings, leaves sheaths, collars and panicles.

The protein localises to the nucleus. In terms of biological role, transcription activator that contributes, together with LO9-177 and ILI5/BUL1, to the promotion of leaf inclination and grain size by modulating cell elongation. Involved in the RLI1-dependent modulation of leaf inclination by promoting lamina joint cell elongation, especially in response to phosphate (Pi) availability. The sequence is that of Transcription factor BC1 from Oryza sativa subsp. japonica (Rice).